Reading from the N-terminus, the 251-residue chain is Small ribosomal subunit protein uS2 (251 aa).

Ser-2 is modified (N-acetylserine). A disordered region spans residues 209–251; the sequence is EIEQQTAEEAAQEAGEEEAKEEVTEEQTEAAEWAQENADNVEW. The span at 218 to 237 shows a compositional bias: acidic residues; sequence AAQEAGEEEAKEEVTEEQTE. The segment covering 238 to 251 has biased composition (low complexity); the sequence is AAEWAQENADNVEW.

The protein belongs to the universal ribosomal protein uS2 family. As to quaternary structure, component of the small ribosomal subunit. Mature ribosomes consist of a small (40S) and a large (60S) subunit. The 40S subunit contains about 33 different proteins and 1 molecule of RNA (18S). The 60S subunit contains about 49 different proteins and 3 molecules of RNA (25S, 5.8S and 5S). Interacts with RPS21.

The protein localises to the cytoplasm. Its function is as follows. Required for the assembly and/or stability of the 40S ribosomal subunit. Required for the processing of the 20S rRNA-precursor to mature 18S rRNA in a late step of the maturation of 40S ribosomal subunits. The chain is Small ribosomal subunit protein uS2 from Candida glabrata (strain ATCC 2001 / BCRC 20586 / JCM 3761 / NBRC 0622 / NRRL Y-65 / CBS 138) (Yeast).